The following is a 143-amino-acid chain: Transcriptional regulator MraZ (143 aa).

SpoVT-AbrB domains are found at residues 5–47 (THHP…PRAE) and 76–119 (TDEQ…NAER).

Belongs to the MraZ family. Forms oligomers.

The protein resides in the cytoplasm. Its subcellular location is the nucleoid. The chain is Transcriptional regulator MraZ from Saccharopolyspora erythraea (strain ATCC 11635 / DSM 40517 / JCM 4748 / NBRC 13426 / NCIMB 8594 / NRRL 2338).